We begin with the raw amino-acid sequence, 341 residues long: Putative MAGE domain-containing protein MAGEA13P (341 aa).

Disordered stretches follow at residues 1 to 21 (MPHS…APKE) and 78 to 101 (KATP…GASQ). Positions 87 to 97 (ESSRSQEKKDP) are enriched in basic and acidic residues. The MAGE domain maps to 105–304 (LEKKVDELVK…SSFPLLYEEA (200 aa)).

The polypeptide is Putative MAGE domain-containing protein MAGEA13P (MAGEA13P) (Homo sapiens (Human)).